Here is a 344-residue protein sequence, read N- to C-terminus: Sorting nexin-16 (344 aa).

Residues 1–10 (MATPYVPVPM) show a composition bias toward pro residues. 2 disordered regions span residues 1-66 (MATP…NTSS) and 81-107 (ASSI…EDRP). The span at 14–26 (NSASSFTTNRNQR) shows a compositional bias: polar residues. Residues 27 to 40 (SSSFGSVSTSSNSS) show a composition bias toward low complexity. Polar residues predominate over residues 41 to 66 (KGQLEDSNMGNFKQTSVPDQMDNTSS). The PX domain occupies 105–218 (DRPSTPTILG…EFLCLDDPPG (114 aa)). Residues Arg144, Thr146, and Arg184 each coordinate a 1,2-diacyl-sn-glycero-3-phospho-(1D-myo-inositol-3-phosphate). Position 222 is a phosphoserine (Ser222). Residues 223–278 (LEESRAFCETLEETNYRLQKELLEKQKEMESLKKLLSEKQLHIDTLENRIRTLSLE) are a coiled coil.

It belongs to the sorting nexin family. Homooligomer. Interacts with EGFR. Detected in placenta, lung, liver,heart and pancreas.

The protein resides in the early endosome membrane. It localises to the late endosome membrane. The protein localises to the cytoplasm. Its subcellular location is the lysosome. May be involved in several stages of intracellular trafficking. Plays a role in protein transport from early to late endosomes. Plays a role in protein transport to the lysosome. Promotes degradation of EGFR after EGF signaling. Plays a role in intracellular transport of vesicular stomatitis virus nucleocapsids from the endosome to the cytoplasm. The protein is Sorting nexin-16 (SNX16) of Homo sapiens (Human).